A 473-amino-acid polypeptide reads, in one-letter code: PPE family protein PPE37 (473 aa).

The Iron-binding motif motif lies at 203–206 (DFLE). 2 helical membrane-spanning segments follow: residues 227-247 (VLDW…AYLV) and 250-270 (PLIY…PAGL).

It belongs to the mycobacterial PPE family.

It localises to the cell membrane. In terms of biological role, essential for efficient heme-iron acquisition (HIA). Binds iron. Strains with a functional PPE37 can utilize low concentrations of hemin very efficiently in broth and on agar plates. During infection, might interfere with the pro-inflammatory cytokine response in infected macrophages. In vitro, incubation of the protein in the presence of M.tuberculosis proteases leads to the cleavage of PPE37 into two segments, the N- and C-terminal segments. Transfection of human monocytic THP-1 cell lines with the N-terminal segment leads to the proliferation and differentiation of THP-1 cells into adherent stellate cells with dendritic cell-like morphology. Transfection of THP-1 cells with the C-terminal segment leads to the apoptosis of the cells. Recombinant protein antigens display strong B-cell response in tuberculosis patients and immunized mice. The protein is PPE family protein PPE37 of Mycobacterium tuberculosis (strain ATCC 25618 / H37Rv).